The primary structure comprises 358 residues: 3-dehydroquinate synthase (358 aa).

NAD(+) contacts are provided by residues 70 to 75, 104 to 108, 128 to 129, K141, K150, and 168 to 171; these read DGEKFK, GVVGD, TT, and CLQT. The Zn(2+) site is built by E183, H246, and H263.

It belongs to the sugar phosphate cyclases superfamily. Dehydroquinate synthase family. It depends on Co(2+) as a cofactor. The cofactor is Zn(2+). Requires NAD(+) as cofactor.

It localises to the cytoplasm. The catalysed reaction is 7-phospho-2-dehydro-3-deoxy-D-arabino-heptonate = 3-dehydroquinate + phosphate. The protein operates within metabolic intermediate biosynthesis; chorismate biosynthesis; chorismate from D-erythrose 4-phosphate and phosphoenolpyruvate: step 2/7. In terms of biological role, catalyzes the conversion of 3-deoxy-D-arabino-heptulosonate 7-phosphate (DAHP) to dehydroquinate (DHQ). This Shewanella frigidimarina (strain NCIMB 400) protein is 3-dehydroquinate synthase.